Here is a 599-residue protein sequence, read N- to C-terminus: Nucleosomal histone kinase 1 (599 aa).

Positions 47 to 328 (WRIGPSIGVG…PDYDKCRSWF (282 aa)) constitute a Protein kinase domain. ATP is bound by residues 53-61 (IGVGGFGEI) and Lys77. The active-site Proton acceptor is Asp183. Disordered regions lie at residues 340–507 (NGDL…PQPR) and 532–599 (RKKK…KYQG). Residues 349–361 (PQTSSNNNLSPPG) are compositionally biased toward polar residues. Ser376, Ser381, Ser382, Ser388, and Ser390 each carry phosphoserine. Basic and acidic residues predominate over residues 435-448 (VKTEPKSTPRERAT). Ser483 bears the Phosphoserine mark. The segment covering 546–558 (SRTPSSRSALASS) has biased composition (low complexity). 2 positions are modified to phosphoserine: Ser564 and Ser586. Position 589 is a phosphothreonine (Thr589).

Belongs to the protein kinase superfamily. CK1 Ser/Thr protein kinase family. VRK subfamily. In terms of assembly, may interact with Unc-89 (via protein kinase domain 1). Interacts with L(2)gl. The cofactor is Mg(2+). In terms of processing, phosphorylated during mitosis and female meiosis. Expressed in ovaries (at protein level). Expressed in indirect flight muscle (IFM) (at protein level).

It localises to the cytoplasm. Its subcellular location is the nucleus. The protein localises to the chromosome. The protein resides in the myofibril. It is found in the sarcomere. It localises to the z line. Its subcellular location is the m line. It catalyses the reaction L-seryl-[protein] + ATP = O-phospho-L-seryl-[protein] + ADP + H(+). The catalysed reaction is L-threonyl-[protein] + ATP = O-phospho-L-threonyl-[protein] + ADP + H(+). Functionally, serine/threonine-protein kinase involved in somatic mitosis and female meiosis. Required for spindle organization in mitosis, and for the establishment or maintenance of meiosis-specific chromosomal configurations, including the prophase I karyosome and the metaphase I spindle. Specifically phosphorylates nucleosomal H2A on 'Thr-119'. Required for the development and organization of indirect flight muscle sarcomeres by regulating the formation of M line and H zone and the correct assembly of thick and thin filaments in the sarcomere. The protein is Nucleosomal histone kinase 1 (ball) of Drosophila melanogaster (Fruit fly).